The following is a 367-amino-acid chain: RYamide receptor (367 aa).

Over 1–35 (MDANTTRNESFSLDCELVNPNSTLANVYFLSAVYS) the chain is Extracellular. N-linked (GlcNAc...) asparagine glycans are attached at residues asparagine 4, asparagine 8, and asparagine 21. Residues 36-56 (MYAIIFVVALIGNSFVCYIVL) form a helical membrane-spanning segment. Topologically, residues 57-66 (SSPPMRTVTN) are cytoplasmic. Residues 67–87 (FFILNLAIGDVLITLLCVPFT) traverse the membrane as a helical segment. The Extracellular segment spans residues 88–113 (SVSLLMQYWPFGGILCPVVNYSQALS). N-linked (GlcNAc...) asparagine glycosylation is present at asparagine 107. Residues 114–134 (VFVSAYTLVAISIDKYMIIMW) traverse the membrane as a helical segment. At 135-143 (PLKPRISKR) the chain is on the cytoplasmic side. Residues 144-164 (FATYIIALVWLIAGITVLPSA) traverse the membrane as a helical segment. At 165 to 212 (TFTTLINDENILGTSAYEQCDKYICAEEYSKVGQEYGDLYTKVLMFLQ) the chain is on the extracellular side. The helical transmembrane segment at 213–233 (YVIPSLVLLFTYTSIGVVIWC) threads the bilayer. The Cytoplasmic segment spans residues 234-258 (HRIPGEAENSRDQRIAKNKTKMIKM). Residues 259–279 (MVTVVCVYTICWLPYNVLMIF) form a helical membrane-spanning segment. The Extracellular segment spans residues 280–282 (KEH). Residues 283 to 303 (ISGSVMVYLYFPLHGLAMSHA) form a helical membrane-spanning segment. At 304-367 (CYNPIIYCYM…EITRAQPTSA (64 aa)) the chain is on the cytoplasmic side.

This sequence belongs to the G-protein coupled receptor 1 family.

It is found in the cell membrane. Its function is as follows. Receptor for the neuropeptides RYamide-1 and RYamide-2. The activity of this receptor is mediated by G proteins which activate a phosphatidyl-inositol-calcium second messenger system. RYamide-2 is the most potent activator. This is RYamide receptor from Tribolium castaneum (Red flour beetle).